A 133-amino-acid polypeptide reads, in one-letter code: Small ribosomal subunit protein uS8 (133 aa).

This sequence belongs to the universal ribosomal protein uS8 family. In terms of assembly, part of the 30S ribosomal subunit. Contacts proteins S5 and S12.

Functionally, one of the primary rRNA binding proteins, it binds directly to 16S rRNA central domain where it helps coordinate assembly of the platform of the 30S subunit. The protein is Small ribosomal subunit protein uS8 of Mycoplasmoides gallisepticum (strain R(low / passage 15 / clone 2)) (Mycoplasma gallisepticum).